A 207-amino-acid polypeptide reads, in one-letter code: Ribonuclease HII (207 aa).

The RNase H type-2 domain occupies 12–201 (ALVAGVDEVG…VRELLDVVSI (190 aa)). D18, E19, and D110 together coordinate a divalent metal cation.

The protein belongs to the RNase HII family. Mn(2+) serves as cofactor. It depends on Mg(2+) as a cofactor.

It is found in the cytoplasm. It carries out the reaction Endonucleolytic cleavage to 5'-phosphomonoester.. Its function is as follows. Endonuclease that specifically degrades the RNA of RNA-DNA hybrids. This chain is Ribonuclease HII, found in Azotobacter vinelandii (strain DJ / ATCC BAA-1303).